Consider the following 95-residue polypeptide: Small ribosomal subunit protein mS37 (95 aa).

The 43-residue stretch at 27 to 69 (ANRCLVLMSNLLQCWSSNGHMNPVCEKLATDLKACTSQNVMGS) folds into the CHCH domain. Short sequence motifs (cx9C motif) lie at residues 30–40 (CLVLMSNLLQC) and 51–61 (CEKLATDLKAC). Intrachain disulfides connect Cys30–Cys61 and Cys40–Cys51.

This sequence belongs to the mitochondrion-specific ribosomal protein mS37 family. As to quaternary structure, component of the mitochondrial small ribosomal subunit.

The protein resides in the mitochondrion. In terms of biological role, involved in mitochondrial genome encoded proteins translation. The sequence is that of Small ribosomal subunit protein mS37 (MRP10) from Eremothecium gossypii (strain ATCC 10895 / CBS 109.51 / FGSC 9923 / NRRL Y-1056) (Yeast).